The sequence spans 444 residues: Phosphoglucosamine mutase (444 aa).

The active-site Phosphoserine intermediate is Ser-104. Mg(2+) is bound by residues Ser-104, Asp-243, Asp-245, and Asp-247. The residue at position 104 (Ser-104) is a Phosphoserine.

This sequence belongs to the phosphohexose mutase family. Mg(2+) is required as a cofactor. In terms of processing, activated by phosphorylation.

The catalysed reaction is alpha-D-glucosamine 1-phosphate = D-glucosamine 6-phosphate. In terms of biological role, catalyzes the conversion of glucosamine-6-phosphate to glucosamine-1-phosphate. This chain is Phosphoglucosamine mutase, found in Neisseria gonorrhoeae (strain ATCC 700825 / FA 1090).